The primary structure comprises 282 residues: Putative 23S rRNA (guanine-N(1)-)-methyltransferase YxjB (282 aa).

Zn(2+) is bound by residues Cys12, Cys15, Cys29, and His34. Glu103 to Gly104 is a binding site for S-adenosyl-L-methionine.

This sequence belongs to the methyltransferase superfamily. RlmA family.

This Bacillus subtilis (strain 168) protein is Putative 23S rRNA (guanine-N(1)-)-methyltransferase YxjB (yxjB).